Here is a 770-residue protein sequence, read N- to C-terminus: Protein argonaute (770 aa).

The interval 1-151 (MKAKVVINLV…VIHIIHQIQS (151 aa)) is N-terminal domain. The region spanning 154–272 (TLWELVNKDP…LLPQLVVPTY (119 aa)) is the PAZ domain. The interdomain connector stretch occupies residues 276–361 (QLESDVAKEI…SQLLLWTNYS (86 aa)). The mid domain stretch occupies residues 362 to 544 (RKYPVILPYE…LSKLGVKYYV (183 aa)). In terms of domain architecture, Piwi spans 473-756 (GLAFIAARNK…FANAIRNEWK (284 aa)). Active-site residues include Asp-558, Glu-596, Asp-628, and His-745. Asp-558 contributes to the Mn(2+) binding site. Positions 628, 745, and 770 each coordinate Mn(2+).

This sequence belongs to the argonaute family. Long pAgo subfamily. In terms of assembly, monomer. The cofactor is Mn(2+).

Inhibited at greater than 500 mM NaCl. A DNA-guided ssDNA endonuclease that may play a role in defense against invading mobile genetic elements. Uses short 5'-phospho-ssDNA sequences as guides (gDNA) to bind complementary target strands, resulting in cleavage of the target DNA (tDNA). Endonucleolytically cleaves DNA in short dsDNA (the gDNA indicates where to cleave on the tDNA). Efficient guide-dependent target DNA cleavage requires a minimal gDNA length of 15 nucleotides (nt) and works up to at least 31 nt. Overexpression decreases plasmid transformation efficiency. Has no appreciable activity with gRNA or on target RNA. Also has guide-independent activity on plasmid DNA called 'chopping'. The cleavage site is 10 nucleotides (nt) downstream of the target residue base-paired with the 5'-end of the gDNA, cleavage is insensitive to adenine methylation. DNA cleavage produces 5'-phosphomonoesters (as it can be ligated by T4 DNA ligase). This Pyrococcus furiosus (strain ATCC 43587 / DSM 3638 / JCM 8422 / Vc1) protein is Protein argonaute.